Consider the following 163-residue polypeptide: ATP synthase subunit b 1 (163 aa).

A helical membrane pass occupies residues 5 to 25 (FDATFFAFVGLILFLALVVYL).

The protein belongs to the ATPase B chain family. In terms of assembly, F-type ATPases have 2 components, F(1) - the catalytic core - and F(0) - the membrane proton channel. F(1) has five subunits: alpha(3), beta(3), gamma(1), delta(1), epsilon(1). F(0) has three main subunits: a(1), b(2) and c(10-14). The alpha and beta chains form an alternating ring which encloses part of the gamma chain. F(1) is attached to F(0) by a central stalk formed by the gamma and epsilon chains, while a peripheral stalk is formed by the delta and b chains.

It is found in the cell inner membrane. F(1)F(0) ATP synthase produces ATP from ADP in the presence of a proton or sodium gradient. F-type ATPases consist of two structural domains, F(1) containing the extramembraneous catalytic core and F(0) containing the membrane proton channel, linked together by a central stalk and a peripheral stalk. During catalysis, ATP synthesis in the catalytic domain of F(1) is coupled via a rotary mechanism of the central stalk subunits to proton translocation. Functionally, component of the F(0) channel, it forms part of the peripheral stalk, linking F(1) to F(0). The sequence is that of ATP synthase subunit b 1 from Rhizobium etli (strain ATCC 51251 / DSM 11541 / JCM 21823 / NBRC 15573 / CFN 42).